We begin with the raw amino-acid sequence, 585 residues long: Urease subunit alpha (585 aa).

In terms of domain architecture, Urease spans 132-585 (GGIDTHIHFI…LPMAQRYFLF (454 aa)). Ni(2+)-binding residues include histidine 137, histidine 139, and lysine 220. N6-carboxylysine is present on lysine 220. Residue histidine 222 participates in substrate binding. Positions 249 and 275 each coordinate Ni(2+). Histidine 323 (proton donor) is an active-site residue. Aspartate 363 contributes to the Ni(2+) binding site.

This sequence belongs to the metallo-dependent hydrolases superfamily. Urease alpha subunit family. As to quaternary structure, heterotrimer of UreA (gamma), UreB (beta) and UreC (alpha) subunits. Three heterotrimers associate to form the active enzyme. Ni cation serves as cofactor. In terms of processing, carboxylation allows a single lysine to coordinate two nickel ions.

It is found in the cytoplasm. The catalysed reaction is urea + 2 H2O + H(+) = hydrogencarbonate + 2 NH4(+). It functions in the pathway nitrogen metabolism; urea degradation; CO(2) and NH(3) from urea (urease route): step 1/1. The polypeptide is Urease subunit alpha (Pseudarthrobacter chlorophenolicus (strain ATCC 700700 / DSM 12829 / CIP 107037 / JCM 12360 / KCTC 9906 / NCIMB 13794 / A6) (Arthrobacter chlorophenolicus)).